Reading from the N-terminus, the 1091-residue chain is ATP-dependent helicase/deoxyribonuclease subunit B (1091 aa).

Belongs to the helicase family. AddB/RexB type 2 subfamily. As to quaternary structure, heterodimer of AddA and RexB. Mg(2+) is required as a cofactor.

In terms of biological role, the heterodimer acts as both an ATP-dependent DNA helicase and an ATP-dependent, dual-direction single-stranded exonuclease. Recognizes the chi site generating a DNA molecule suitable for the initiation of homologous recombination. This subunit has 5' -&gt; 3' nuclease activity but not helicase activity. This is ATP-dependent helicase/deoxyribonuclease subunit B from Streptococcus pneumoniae (strain Hungary19A-6).